The sequence spans 354 residues: Histidinol-phosphate aminotransferase (354 aa).

Residue lysine 210 is modified to N6-(pyridoxal phosphate)lysine.

It belongs to the class-II pyridoxal-phosphate-dependent aminotransferase family. Histidinol-phosphate aminotransferase subfamily. Homodimer. The cofactor is pyridoxal 5'-phosphate.

The enzyme catalyses L-histidinol phosphate + 2-oxoglutarate = 3-(imidazol-4-yl)-2-oxopropyl phosphate + L-glutamate. Its pathway is amino-acid biosynthesis; L-histidine biosynthesis; L-histidine from 5-phospho-alpha-D-ribose 1-diphosphate: step 7/9. The polypeptide is Histidinol-phosphate aminotransferase (Clostridium botulinum (strain ATCC 19397 / Type A)).